The sequence spans 460 residues: Acetyl-CoA decarbonylase/synthase complex subunit beta (460 aa).

The [Ni-Fe-S] cluster site is built by Cys188, Cys191, Cys277, and Cys279. Acidic residues predominate over residues 402–416 (EETEPEEEEVEEAYP). The tract at residues 402-422 (EETEPEEEEVEEAYPEETPIP) is disordered.

Belongs to the CdhC family. Monomer. The ACDS complex is made up of alpha, epsilon, beta, gamma and delta chains with a probable stoichiometry of (alpha(2)epsilon(2))(4)-beta(8)-(gamma(1)delta(1))(8). [Ni-Fe-S] cluster is required as a cofactor.

The enzyme catalyses Co(I)-[corrinoid Fe-S protein] + acetyl-CoA + H(+) = methyl-Co(III)-[corrinoid Fe-S protein] + CO + CoA. Its function is as follows. Part of a complex that catalyzes the reversible cleavage of acetyl-CoA, allowing autotrophic growth from CO(2). The alpha-epsilon complex generates CO from CO(2), while the beta subunit (this protein) combines the CO with CoA and a methyl group to form acetyl-CoA. The methyl group, which is incorporated into acetyl-CoA, is transferred to the beta subunit by a corrinoid iron-sulfur protein (the gamma-delta complex). The sequence is that of Acetyl-CoA decarbonylase/synthase complex subunit beta from Methanothermobacter thermautotrophicus (strain ATCC 29096 / DSM 1053 / JCM 10044 / NBRC 100330 / Delta H) (Methanobacterium thermoautotrophicum).